We begin with the raw amino-acid sequence, 542 residues long: Chaperonin GroEL (542 aa).

ATP-binding positions include 30-33 (TLGP), Lys-51, 87-91 (DGTTT), Gly-415, 480-482 (NAA), and Asp-496.

This sequence belongs to the chaperonin (HSP60) family. Forms a cylinder of 14 subunits composed of two heptameric rings stacked back-to-back. Interacts with the co-chaperonin GroES.

It is found in the cytoplasm. The catalysed reaction is ATP + H2O + a folded polypeptide = ADP + phosphate + an unfolded polypeptide.. In terms of biological role, together with its co-chaperonin GroES, plays an essential role in assisting protein folding. The GroEL-GroES system forms a nano-cage that allows encapsulation of the non-native substrate proteins and provides a physical environment optimized to promote and accelerate protein folding. The sequence is that of Chaperonin GroEL from Tremblaya princeps.